We begin with the raw amino-acid sequence, 127 residues long: Large ribosomal subunit protein eL8 (127 aa).

Belongs to the eukaryotic ribosomal protein eL8 family. As to quaternary structure, part of the 50S ribosomal subunit. Component of box C/D small ribonucleoprotein (sRNP) particles that contain rpl7ae, FlpA and nop5, plus a guide RNA. These sRNP particles form homodimers, giving rise to an asymmetric holoenzyme. Probably part of the RNase P complex.

It is found in the cytoplasm. Functionally, multifunctional RNA-binding protein that recognizes the K-turn motif in ribosomal RNA, the RNA component of RNase P, box H/ACA, box C/D and box C'/D' sRNAs. The protein is Large ribosomal subunit protein eL8 of Saccharolobus solfataricus (strain ATCC 35092 / DSM 1617 / JCM 11322 / P2) (Sulfolobus solfataricus).